A 291-amino-acid polypeptide reads, in one-letter code: Bis(5'-nucleosyl)-tetraphosphatase, symmetrical (291 aa).

It belongs to the Ap4A hydrolase family.

It catalyses the reaction P(1),P(4)-bis(5'-adenosyl) tetraphosphate + H2O = 2 ADP + 2 H(+). In terms of biological role, hydrolyzes diadenosine 5',5'''-P1,P4-tetraphosphate to yield ADP. The chain is Bis(5'-nucleosyl)-tetraphosphatase, symmetrical from Coxiella burnetii (strain Dugway 5J108-111).